Here is a 146-residue protein sequence, read N- to C-terminus: Large ribosomal subunit protein bL19 (146 aa).

It belongs to the bacterial ribosomal protein bL19 family.

Its function is as follows. This protein is located at the 30S-50S ribosomal subunit interface and may play a role in the structure and function of the aminoacyl-tRNA binding site. The chain is Large ribosomal subunit protein bL19 from Bartonella henselae (strain ATCC 49882 / DSM 28221 / CCUG 30454 / Houston 1) (Rochalimaea henselae).